The primary structure comprises 554 residues: ATP synthase subunit alpha (554 aa).

172–179 (GDRKTGKT) provides a ligand contact to ATP. Residues 528–554 (LDEEELEKESVKVKKPAPEKKAKKEQK) are disordered. Positions 535-554 (KESVKVKKPAPEKKAKKEQK) are enriched in basic and acidic residues.

The protein belongs to the ATPase alpha/beta chains family. As to quaternary structure, F-type ATPases have 2 components, CF(1) - the catalytic core - and CF(0) - the membrane proton channel. CF(1) has five subunits: alpha(3), beta(3), gamma(1), delta(1), epsilon(1). CF(0) has three main subunits: a(1), b(2) and c(9-12). The alpha and beta chains form an alternating ring which encloses part of the gamma chain. CF(1) is attached to CF(0) by a central stalk formed by the gamma and epsilon chains, while a peripheral stalk is formed by the delta and b chains.

Its subcellular location is the cell membrane. The enzyme catalyses ATP + H2O + 4 H(+)(in) = ADP + phosphate + 5 H(+)(out). In terms of biological role, produces ATP from ADP in the presence of a proton gradient across the membrane. The alpha chain is a regulatory subunit. The protein is ATP synthase subunit alpha of Mycolicibacterium paratuberculosis (strain ATCC BAA-968 / K-10) (Mycobacterium paratuberculosis).